The sequence spans 388 residues: S-adenosylmethionine synthase (388 aa).

Residue His17 coordinates ATP. Asp19 contacts Mg(2+). Glu45 serves as a coordination point for K(+). Residues Glu58 and Gln106 each contribute to the L-methionine site. The segment at 106-116 is flexible loop; it reads QSAHISQGVDR. ATP is bound by residues 166-168, Asp241, 247-248, Ala264, and Lys268; these read DAK and RK. Asp241 provides a ligand contact to L-methionine. Residue Lys272 participates in L-methionine binding.

It belongs to the AdoMet synthase family. In terms of assembly, homotetramer; dimer of dimers. Mg(2+) is required as a cofactor. The cofactor is K(+).

The protein resides in the cytoplasm. It catalyses the reaction L-methionine + ATP + H2O = S-adenosyl-L-methionine + phosphate + diphosphate. Its pathway is amino-acid biosynthesis; S-adenosyl-L-methionine biosynthesis; S-adenosyl-L-methionine from L-methionine: step 1/1. In terms of biological role, catalyzes the formation of S-adenosylmethionine (AdoMet) from methionine and ATP. The overall synthetic reaction is composed of two sequential steps, AdoMet formation and the subsequent tripolyphosphate hydrolysis which occurs prior to release of AdoMet from the enzyme. This chain is S-adenosylmethionine synthase, found in Paracoccus denitrificans (strain Pd 1222).